We begin with the raw amino-acid sequence, 107 residues long: Acidic phospholipase A2 braziliase-I (107 aa).

7 disulfide bridges follow: Cys-26/Cys-100, Cys-28/Cys-44, Cys-43/Cys-86, Cys-49/Cys-107, Cys-50/Cys-79, Cys-57/Cys-72, and Cys-66/Cys-77. 3 residues coordinate Ca(2+): Tyr-27, Gly-29, and Gly-31. His-47 is an active-site residue. Asp-48 is a binding site for Ca(2+). The active site involves Asp-80.

As to quaternary structure, monomer. Ca(2+) serves as cofactor. As to expression, expressed by the venom gland.

The protein resides in the secreted. The enzyme catalyses a 1,2-diacyl-sn-glycero-3-phosphocholine + H2O = a 1-acyl-sn-glycero-3-phosphocholine + a fatty acid + H(+). Functionally, snake venom phospholipase A2 (PLA2) that induces significant edematogenic activity. Shows mild cytotoxicity on Trypanosoma cruzi and Leishmania infantum. Also inhibits ADP- and collagen-induced platelet aggregation. Does not show myotoxic activity. The protein is Acidic phospholipase A2 braziliase-I of Bothrops brazili (Brazil's lancehead).